A 234-amino-acid polypeptide reads, in one-letter code: UPF0758 protein STH371 (234 aa).

The MPN domain maps to 110–232; sequence DLCNPRAVFE…YTSFRERGLL (123 aa). Positions 181, 183, and 194 each coordinate Zn(2+). Positions 181–194 match the JAMM motif motif; it reads HNHPSGDPTPSRED.

Belongs to the UPF0758 family.

This Symbiobacterium thermophilum (strain DSM 24528 / JCM 14929 / IAM 14863 / T) protein is UPF0758 protein STH371.